Reading from the N-terminus, the 116-residue chain is Large ribosomal subunit protein uL18 (116 aa).

It belongs to the universal ribosomal protein uL18 family. As to quaternary structure, part of the 50S ribosomal subunit; part of the 5S rRNA/L5/L18/L25 subcomplex. Contacts the 5S and 23S rRNAs.

This is one of the proteins that bind and probably mediate the attachment of the 5S RNA into the large ribosomal subunit, where it forms part of the central protuberance. This chain is Large ribosomal subunit protein uL18, found in Mycoplasma mycoides subsp. mycoides SC (strain CCUG 32753 / NCTC 10114 / PG1).